The sequence spans 430 residues: Adenylosuccinate synthetase (430 aa).

GTP is bound by residues 12 to 18 (GDEGKGK) and 40 to 42 (GHT). Asp13 (proton acceptor) is an active-site residue. Mg(2+) contacts are provided by Asp13 and Gly40. IMP contacts are provided by residues 13–16 (DEGK), 38–41 (NAGH), Thr128, Arg142, Gln223, Thr238, and Arg302. Residue His41 is the Proton donor of the active site. 298–304 (TTTGRPR) provides a ligand contact to substrate. Residues Arg304, 330–332 (LLD), and 412–414 (SVG) contribute to the GTP site.

Belongs to the adenylosuccinate synthetase family. Homodimer. Mg(2+) serves as cofactor.

The protein resides in the cytoplasm. It catalyses the reaction IMP + L-aspartate + GTP = N(6)-(1,2-dicarboxyethyl)-AMP + GDP + phosphate + 2 H(+). The protein operates within purine metabolism; AMP biosynthesis via de novo pathway; AMP from IMP: step 1/2. Functionally, plays an important role in the de novo pathway of purine nucleotide biosynthesis. Catalyzes the first committed step in the biosynthesis of AMP from IMP. This chain is Adenylosuccinate synthetase, found in Listeria welshimeri serovar 6b (strain ATCC 35897 / DSM 20650 / CCUG 15529 / CIP 8149 / NCTC 11857 / SLCC 5334 / V8).